Here is a 255-residue protein sequence, read N- to C-terminus: Tabinhibitin 1 (255 aa).

An N-terminal signal peptide occupies residues 1 to 23 (MTSILVSRFLIAALVLQYATSDA). The region spanning 67–211 (LSKINDVRDH…KARALLTCNF (145 aa)) is the SCP domain.

Belongs to the CRISP family. Expressed in salivary glands.

Its subcellular location is the secreted. In terms of biological role, inhibits platelet aggregation induced by all agonists tested. May act by competing with fibrinogen for binding to glycoprotein IIb/IIIa (ITGA2B/ITGB3). The protein is Tabinhibitin 1 of Tabanus yao (Horsefly).